The sequence spans 781 residues: Chloride channel protein CLC-f (781 aa).

2 disordered regions span residues 1–41 and 79–98; these read MSSG…QSPA and RERHNPSSSSAFSAAGEEDG. Basic and acidic residues predominate over residues 10-20; it reads NEDRHLLRSTD. The next 12 membrane-spanning stretches (helical) occupy residues 129-149, 184-204, 221-241, 250-270, 279-299, 314-334, 350-370, 388-408, 433-453, 457-477, 502-522, and 523-543; these read WALLLIGCLIGVAAGICVAGF, ILLIPVTGGVIVGMMHGLLEI, FLAGIYPVIKAIQAAVTLGTG, SVDIGKSCANGFALMMENNRE, GAASGIASGFNAAVAGCFFAI, FTTAMIILASVISSTVSNALL, AAELPLYLILGMLCGAVSVVF, FGLPAIVCPALGGLGAGIIAL, APGIWLLAQLAAAKVVATALC, GLVGGLYAPSLMIGAAVGAVF, ALVGMAATLASMCSVPLTSVL, and LLFELTKDYRILLPLMGAVGL. The tract at residues 553 to 584 is disordered; sequence QGKESDSSEGRSTGRGYSSLSPSERKTEGVWR. The span at 575–584 shows a compositional bias: basic and acidic residues; that stretch reads SERKTEGVWR. 2 consecutive CBS domains span residues 621-677 and 699-763; these read MSKN…NAST and QERG…EMSR. Residues 726 to 746 traverse the membrane as a helical segment; the sequence is QLPVVKRGEVIHKGKRRKLLG.

Belongs to the chloride channel (TC 2.A.49) family. Homodimer.

Its subcellular location is the membrane. Functionally, voltage-gated chloride channel. The polypeptide is Chloride channel protein CLC-f (CLC-F) (Arabidopsis thaliana (Mouse-ear cress)).